The sequence spans 334 residues: 6-phosphogluconolactonase (334 aa).

Belongs to the cycloisomerase 2 family.

The catalysed reaction is 6-phospho-D-glucono-1,5-lactone + H2O = 6-phospho-D-gluconate + H(+). The protein operates within carbohydrate degradation; pentose phosphate pathway; D-ribulose 5-phosphate from D-glucose 6-phosphate (oxidative stage): step 2/3. Its function is as follows. Catalyzes the hydrolysis of 6-phosphogluconolactone to 6-phosphogluconate. This Yersinia pseudotuberculosis serotype O:1b (strain IP 31758) protein is 6-phosphogluconolactonase.